A 550-amino-acid polypeptide reads, in one-letter code: Atherin (550 aa).

The span at 1–11 shows a compositional bias: pro residues; that stretch reads MAGPPALPPPE. Disordered stretches follow at residues 1–32 and 93–468; these read MAGPPALPPPETAAAATTAAAAASSSAASPHY and SYRN…KEKP. Low complexity predominate over residues 12-30; the sequence is TAAAATTAAAAASSSAASP. Positions 24–100 constitute an SAMD1-like winged helix (WH) domain; sequence SSSAASPHYQ…SISYRNAARV (77 aa). At Thr108 the chain carries Phosphothreonine. Over residues 125–138 the composition is skewed to pro residues; that stretch reads APPPTPAPPPPPAP. Low complexity predominate over residues 139 to 160; it reads VAAAAAPARAPRAAAAAAAATA. Ser163 is subject to Phosphoserine. The span at 170 to 179 shows a compositional bias: low complexity; it reads GPRAQRAAPL. Pro residues-rich tracts occupy residues 180–205 and 214–245; these read AAPPPAPAAPPAAAPPAGPRRAPPPA and PLPPPPQPPAPPQQQQQPPPPPPPQQPQPPPE. Positions 246–257 are enriched in low complexity; that stretch reads GGAARAGGPARP. Ser270 bears the Phosphoserine mark. The segment covering 290 to 300 has biased composition (basic and acidic residues); the sequence is AAARGRLERTR. Acidic residues predominate over residues 337 to 355; that stretch reads KEEEEEEEEDDEDDDDDVV. Residues 437–448 show a composition bias toward pro residues; that stretch reads SPSPVPLPPGKP. The SAM domain occupies 474–542; that stretch reads WTVMDVVEYF…KVLQQGHFED (69 aa).

In terms of assembly, homopolymerize into a closed pentameric ring. Interacts (via SAM domain) with L3MBTL3 (via SAM domain); the interaction mediates L3MBTL3 binding to chromatin. Interacts (via WH domain) with KDM1A; the interaction modulates KDM1A function.

The protein localises to the nucleus. It is found in the chromosome. The protein resides in the secreted. Unmethylated CpG islands (CGIs)-binding protein which localizes to H3K4me3-decorated CGIs, where it acts as a transcriptional repressor. Tethers L3MBTL3 to chromatin and interacts with the KDM1A histone demethylase complex to modulate H3K4me2 and H3K4me3 levels at CGIs. Plays a role in atherogenesis by binding with LDL on cell surface and promoting LDL oxidation which leads to the formation of foam cell. In Oryctolagus cuniculus (Rabbit), this protein is Atherin (SAMD1).